Here is a 1454-residue protein sequence, read N- to C-terminus: ABC transporter G family member 43 (1454 aa).

Positions 23 to 47 (ARSLRDGDDPFRRSAAASRRDAGDD) are disordered. A compositionally biased stretch (basic and acidic residues) spans 25-44 (SLRDGDDPFRRSAAASRRDA). N-linked (GlcNAc...) asparagine glycosylation is present at Asn163. The 275-residue stretch at 170–444 (EGLVSLFISS…FESAGFRCPE (275 aa)) folds into the ABC transporter 1 domain. 204–211 (GPPSSGKS) serves as a coordination point for ATP. N-linked (GlcNAc...) asparagine glycosylation occurs at Asn393. In terms of domain architecture, ABC transmembrane type-2 1 spans 524-735 (LKAVMSREWL…SNNALSVNEF (212 aa)). Transmembrane regions (helical) follow at residues 540 to 560 (FLFIFKAFQLFVLGFITMTLF), 577 to 597 (VGALTASLITIMFNGFGELQL), 613 to 630 (FFPAWTYGLANIILKVPL), 637 to 656 (LWIVLTYYVVGFAPAAGRFF), 659 to 679 (FLAYFWTHQMALALFRLLGAI), and 684 to 704 (VVANTFGMFVLLLIFLFGGFL). Residue Asn745 is glycosylated (N-linked (GlcNAc...) asparagine). A helical membrane pass occupies residues 775–795 (IGAMIGFMIVFNILYLCALTF). The interval 804–823 (TVVSDDDTKSELEAESNQEQ) is disordered. N-linked (GlcNAc...) asparagine glycosylation is found at Asn829 and Asn832. The ABC transporter 2 domain occupies 852 to 1104 (LSFNHMNYYV…ILVEYFEAIP (253 aa)). 897-904 (GVSGAGKT) is an ATP binding site. A glycan (N-linked (GlcNAc...) asparagine) is linked at Asn951. An ABC transmembrane type-2 2 domain is found at 1178–1391 (QCVANTWKQF…TIYGVIASQF (214 aa)). Helical transmembrane passes span 1196–1216 (YNAMRYVMTLLYGLVFGTVFW), 1236–1256 (YAAVFFLGAANLLTLLPVVSV), 1284–1304 (FCYSAVQGVLYTILIYSMIGY), 1314–1334 (FLFFMIAAFAYFTLFSMMLVA), 1341–1361 (LAAVLVSFVLSSWNNFAGFII), 1372–1392 (WFYWANPVSWTIYGVIASQFA), and 1423–1443 (FLGYVVLAHFGYVIIFFFLFG).

Belongs to the ABC transporter superfamily. ABCG family. PDR (TC 3.A.1.205) subfamily. As to expression, specifically expressed in the vasculature of roots, stems, panicles, sheaths and leaves.

Its subcellular location is the cell membrane. Its function is as follows. ABC transporter modulating cadmium (Cd) import, thus controlling Cd(2+) accumulation to prevent phytotoxicity. Confers high tolerance to Cd in yeast. Prevents leaf bacteria proliferation, such as Xanthomonas oryzae pv. oryzicola (Xoc) RS105 and X.oryzae pv. oryzae (Xoo) PXO99, by triggering Cd accumulation, which in turn impairs bacterial virulence factors. This chain is ABC transporter G family member 43, found in Oryza sativa subsp. japonica (Rice).